The following is a 300-amino-acid chain: N-acetylmuramic acid 6-phosphate etherase (300 aa).

An SIS domain is found at 57–220 (ITHAFAHGGR…TSGAMIRSGK (164 aa)). Residue Glu-85 is the Proton donor of the active site. The active site involves Glu-116.

Belongs to the GCKR-like family. MurNAc-6-P etherase subfamily. As to quaternary structure, homodimer.

It catalyses the reaction N-acetyl-D-muramate 6-phosphate + H2O = N-acetyl-D-glucosamine 6-phosphate + (R)-lactate. Its pathway is amino-sugar metabolism; 1,6-anhydro-N-acetylmuramate degradation. It functions in the pathway amino-sugar metabolism; N-acetylmuramate degradation. The protein operates within cell wall biogenesis; peptidoglycan recycling. Specifically catalyzes the cleavage of the D-lactyl ether substituent of MurNAc 6-phosphate, producing GlcNAc 6-phosphate and D-lactate. Together with AnmK, is also required for the utilization of anhydro-N-acetylmuramic acid (anhMurNAc) either imported from the medium or derived from its own cell wall murein, and thus plays a role in cell wall recycling. This chain is N-acetylmuramic acid 6-phosphate etherase, found in Vibrio vulnificus (strain CMCP6).